The following is a 145-amino-acid chain: UPF0179 protein MmarC6_0993 (145 aa).

Belongs to the UPF0179 family.

The sequence is that of UPF0179 protein MmarC6_0993 from Methanococcus maripaludis (strain C6 / ATCC BAA-1332).